Reading from the N-terminus, the 393-residue chain is Cytotoxic and regulatory T-cell molecule (393 aa).

Positions 1 to 17 (MWWRVLSLLAWFPLQEA) are cleaved as a signal peptide. The Ig-like V-type domain maps to 18–114 (SLTNHTETIT…VSTKEVKVIV (97 aa)). Residues 18 to 287 (SLTNHTETIT…YLGLARKKSG (270 aa)) lie on the Extracellular side of the membrane. 3 N-linked (GlcNAc...) asparagine glycosylation sites follow: Asn-21, Asn-87, and Asn-178. 2 disulfides stabilise this stretch: Cys-38–Cys-98 and Cys-141–Cys-196. The Ig-like C2-type domain occupies 118–210 (PFKPILEASV…RGLQGRKLVA (93 aa)). A disordered region spans residues 225–273 (SDALERNSLSSQDPQQPTSTVSVTEDSSTSEIDKEEKEQTTQDPDLTTE). Positions 231-241 (NSLSSQDPQQP) are enriched in polar residues. The segment covering 242–254 (TSTVSVTEDSSTS) has biased composition (low complexity). Basic and acidic residues predominate over residues 255–264 (EIDKEEKEQT). Residues 288–308 (ILLLTLVSFLIFILFIIVQLF) form a helical membrane-spanning segment. Topologically, residues 309–393 (IMKLRKAHVI…KHIQVPESIV (85 aa)) are cytoplasmic. Composition is skewed to basic and acidic residues over residues 328 to 348 (HTLESYRSRSNNEETSSEEKN) and 374 to 387 (ENVQHSKLEEKHIQ). 2 disordered regions span residues 328-354 (HTLESYRSRSNNEETSSEEKNGQSSHP) and 374-393 (ENVQHSKLEEKHIQVPESIV). The short motif at 390 to 393 (ESIV) is the PDZ-binding element.

The protein belongs to the nectin family. In terms of assembly, monomer. May form homodimer (via Ig-like V-type domain). Interacts (via Ig-like V-type domain) with CADM1 (via Ig-like V-type domain); the interaction competes with CRTAM homodimerization and CADM1 homodimerization. Interacts (via PDZ-binding motif) with SCRIB (via PDZ domain 3); the interaction promotes CRTAM and SCRIB polarization in a subset of CD4+ T-cells. As to expression, in the immune system, expression is restricted to activated class-I MHC-restricted cells, including NKT and CD8 T-cells. Strongly expressed in spleen, thymus, small intestine, peripheral blood leukocyte, and in Purkinje neurons in cerebellum. Expressed at much lower levels in testis, ovary, colon, lung and lymphoid tissues.

It localises to the cell membrane. In terms of biological role, mediates heterophilic cell-cell adhesion which regulates the activation, differentiation and tissue retention of various T-cell subsets. Interaction with CADM1 promotes natural killer (NK) cell cytotoxicity and IFNG/interferon-gamma secretion by CD8+ T-cells in vitro as well as NK cell-mediated rejection of tumors expressing CADM1 in vivo. Regulates CD8+ T-cell proliferation in response to T-cell receptor (TCR) activation. Appears to be dispensable for CD8+ T-cell-mediated cytotoxicity. Interaction with SCRIB promotes the late phase of cellular polarization of a subset of CD4+ T-cells, which in turn regulates TCR-mediated proliferation and IFNG, IL17 and IL22 production. By interacting with CADM1 on CD8+ dendritic cells, regulates the retention of activated CD8+ T-cells within the draining lymph node. Required for the intestinal retention of intraepithelial CD4+ CD8+ T-cells and, to a lesser extent, intraepithelial and lamina propria CD8+ T-cells and CD4+ T-cells. Interaction with CADM1 promotes the adhesion to gut-associated CD103+ dendritic cells, which may facilitate the expression of gut-homing and adhesion molecules on T-cells and the conversion of CD4+ T-cells into CD4+ CD8+ T-cells. This Homo sapiens (Human) protein is Cytotoxic and regulatory T-cell molecule.